Reading from the N-terminus, the 422-residue chain is O-mycaminosyltylonolide 6-deoxyallosyltransferase (422 aa).

The protein belongs to the glycosyltransferase 28 family.

It carries out the reaction 5-O-beta-D-mycaminosyltylonolide + dTDP-6-deoxy-alpha-D-allose = demethyllactenocin + dTDP + H(+). Its function is as follows. Involved in the biosynthesis of the macrolide antibiotic tylosin derived from the polyketide lactone tylactone. Catalyzes the transfer of 6-deoxy-alpha-D-allose from dTDP-6-deoxy-alpha-D-allose to O-mycaminosyltylonolide (OMT) to yield demethyllactenocin. This chain is O-mycaminosyltylonolide 6-deoxyallosyltransferase, found in Streptomyces fradiae (Streptomyces roseoflavus).